A 215-amino-acid chain; its full sequence is Ribonuclease T (215 aa).

In terms of domain architecture, Exonuclease spans Val20–Phe194. Positions 23, 25, 181, and 186 each coordinate Mg(2+). The Proton donor/acceptor role is filled by His181.

Belongs to the RNase T family. Homodimer. It depends on Mg(2+) as a cofactor.

In terms of biological role, trims short 3' overhangs of a variety of RNA species, leaving a one or two nucleotide 3' overhang. Responsible for the end-turnover of tRNA: specifically removes the terminal AMP residue from uncharged tRNA (tRNA-C-C-A). Also appears to be involved in tRNA biosynthesis. This is Ribonuclease T from Shigella boydii serotype 4 (strain Sb227).